The sequence spans 412 residues: Elongation factor 1-gamma 2 (412 aa).

An N-acetylserine modification is found at Ser-2. The GST N-terminal domain occupies 2-77 (SQGTLYINRS…YLANQVADEK (76 aa)). The region spanning 86 to 217 (DVIEKSQILR…AEKALTYTPP (132 aa)) is the GST C-terminal domain. The tract at residues 216 to 253 (PPKKQKAEKPKAEKSKAEKKKDEAKPADDAAPAKKPKH) is disordered. Residues 220–247 (QKAEKPKAEKSKAEKKKDEAKPADDAAP) are compositionally biased toward basic and acidic residues. The region spanning 251–412 (PKHPLEALGK…KEIVDGKVLK (162 aa)) is the EF-1-gamma C-terminal domain.

The eukaryotic elongation factor 1 complex (eEF1) is probably a heterohexamer. Two trimeric complexes, each composed of eEF1A (TEF1 or TEF2), eEF1Balpha (EFB1) and eEF1Bgamma (CAM1 or TEF4), are probably dimerized via the eF1Bgamma subunits. The eEF1B subcomplex with the GEF activity is formed of eEF1Balpha and eEF1Bgamma. TEF4 interacts with EFB1.

The protein localises to the cytoplasm. The protein operates within protein biosynthesis; polypeptide chain elongation. Subunit of the eukaryotic elongation factor 1 complex (eEF1). Probably plays a role in anchoring the complex to other cellular components. This Saccharomyces cerevisiae (strain ATCC 204508 / S288c) (Baker's yeast) protein is Elongation factor 1-gamma 2 (TEF4).